The chain runs to 771 residues: PH and SEC7 domain-containing protein 2 (771 aa).

Disordered stretches follow at residues 1-67 and 107-136; these read MEED…PDVA and GDNA…VRDG. A compositionally biased stretch (basic and acidic residues) spans 47–66; that stretch reads GHERRGTPADTEEPTKDPDV. Ser-191 carries the phosphoserine modification. Disordered regions lie at residues 207-230 and 244-307; these read GDMG…SSSR and PNGF…ANGC. Residues 218–230 are compositionally biased toward low complexity; sequence LGSPLRRSISSSR. Residues 257-266 are compositionally biased toward acidic residues; that stretch reads GDEDDDEEDT. Residues 260-462 enclose the SEC7 domain; that stretch reads DDDEEDTDKL…KTLYNSIKNE (203 aa). Residues 288-299 are compositionally biased toward low complexity; the sequence is ELSSSEGLEPGS. In terms of domain architecture, PH spans 512–625; that stretch reads TTYKHGVLTR…WILRINLVAA (114 aa). Residues 622–639 traverse the membrane as a helical segment; sequence LVAAIFSAPAFPAAVSSM. Residues 651–680 adopt a coiled-coil conformation; the sequence is TTRLCQEEQLRSHENKLRQLTAELAEHRCH. Residues 739–771 form a disordered region; it reads DDPSLRKTHSSPALSQGHVTGSKTTKDATGPDT. Residues 748-761 show a composition bias toward polar residues; that stretch reads SSPALSQGHVTGSK.

It belongs to the PSD family.

It is found in the cell membrane. Its subcellular location is the cell projection. It localises to the ruffle membrane. The protein localises to the cleavage furrow. The sequence is that of PH and SEC7 domain-containing protein 2 (PSD2) from Homo sapiens (Human).